The chain runs to 337 residues: MVREKVTVSTRTLQWKCVESRADSKRLYYGRFILSPLIKGQADTIGIAMRRALLGEIEGTCITRAKSEKIPHEYSTIVGIEESVHEILMNLKEIVLRSNLYGTRNASICIRGPGYVTAQDIISPPSVETVDNTQHIANLTEPIDFCIELEIERNRGYRMKTPNNSQDGSYPIDAVFMPVRNANHSIHSYANGNEKQEILFLEIWTNGSLTPKEALHEASRNLIDLFIPFLHAQEENILLEDNQNGVTLPFFTFHDRLAKIRKNEKEIALKYIFIDQSELPPRTYNCLKRSNIHTLLDLFNNSQEDLMKIEDFRIEDVKQILGILQKHFTVDLPKNKF.

Residues 1-233 (MVREKVTVST…DLFIPFLHAQ (233 aa)) form an alpha N-terminal domain (alpha-NTD) region. The tract at residues 267 to 337 (IALKYIFIDQ…FTVDLPKNKF (71 aa)) is alpha C-terminal domain (alpha-CTD).

It belongs to the RNA polymerase alpha chain family. In terms of assembly, in plastids the minimal PEP RNA polymerase catalytic core is composed of four subunits: alpha, beta, beta', and beta''. When a (nuclear-encoded) sigma factor is associated with the core the holoenzyme is formed, which can initiate transcription.

Its subcellular location is the plastid. The protein resides in the chloroplast. The catalysed reaction is RNA(n) + a ribonucleoside 5'-triphosphate = RNA(n+1) + diphosphate. Its function is as follows. DNA-dependent RNA polymerase catalyzes the transcription of DNA into RNA using the four ribonucleoside triphosphates as substrates. The polypeptide is DNA-directed RNA polymerase subunit alpha (Platanus occidentalis (Sycamore)).